The sequence spans 549 residues: Glucose-6-phosphate isomerase (549 aa).

E355 serves as the catalytic Proton donor. Active-site residues include H386 and K514.

This sequence belongs to the GPI family.

Its subcellular location is the cytoplasm. It catalyses the reaction alpha-D-glucose 6-phosphate = beta-D-fructose 6-phosphate. It functions in the pathway carbohydrate biosynthesis; gluconeogenesis. The protein operates within carbohydrate degradation; glycolysis; D-glyceraldehyde 3-phosphate and glycerone phosphate from D-glucose: step 2/4. In terms of biological role, catalyzes the reversible isomerization of glucose-6-phosphate to fructose-6-phosphate. This is Glucose-6-phosphate isomerase from Salmonella typhi.